A 319-amino-acid chain; its full sequence is MTPLLRTICAILCILIAVPLTFACPTKAGVSKQANKRPTYAIAHMVLDRKGLKDAIKNGANSVEIDIAAYKEGWWADHDIRGRSWGDSLEDMFKAVAKESKNIAFVWLDLKTPDMCSGATCNKDVLDPSKCKPKDKCSMNSLQELAQKILNPAGVRILYGFFGAGATDSAGFNYIQGNLKAGEAVCLSGEVENVLNVYKKKGRGVKPQQRVMDYGYTQLETGFGNCKEKGYNTCAGLRNGAKARDKGDVKRVFGWTSRVGDGERVGQLLDKAHVDGIIYGFAITRYYDHEDSRAAARDITQRVQKSDDRYMATGADKPW.

The N-terminal stretch at 1–23 (MTPLLRTICAILCILIAVPLTFA) is a signal peptide. H44 is an active-site residue. Positions 64, 66, and 109 each coordinate Mg(2+). An SMD-tail motif is present at residues 312-319 (ATGADKPW).

This sequence belongs to the sphingomyelinase D/phospholipase D family. Mg(2+) is required as a cofactor.

It localises to the secreted. It carries out the reaction a sphingomyelin + H2O = an N-acylsphing-4-enine 1-phosphate + choline + H(+). In terms of biological role, catalyzes the hydrolysis of sphingomyelin. Sphingomyelinases D are produced by some spider in their venoms, but also by arthropods such as ticks, or pathogenic bacteria and fungi. They might play a role in pathogenicity through different mechanisms, such as membrane destabilization and host cell penetration, but also pulmonary inflammation and cutaneous lesions. This Ajellomyces capsulatus (strain G186AR / H82 / ATCC MYA-2454 / RMSCC 2432) (Darling's disease fungus) protein is Sphingomyelinase D.